Here is a 378-residue protein sequence, read N- to C-terminus: Formate dehydrogenase 2, mitochondrial (378 aa).

The N-terminal 18 residues, 1–18, are a transit peptide targeting the mitochondrion; that stretch reads MAMWRAPSAAGQLLGRAL. Residues valine 122 and asparagine 146 each contribute to the substrate site. Residues threonine 147, 201–202, aspartate 221, 256–260, asparagine 282, aspartate 308, and 332–335 each bind NAD(+); these read RI, PLTEK, and HCSG.

This sequence belongs to the D-isomer specific 2-hydroxyacid dehydrogenase family. FDH subfamily. In terms of assembly, homodimer.

Its subcellular location is the mitochondrion. It carries out the reaction formate + NAD(+) = CO2 + NADH. In terms of biological role, catalyzes the NAD(+)-dependent oxidation of formate to carbon dioxide. Involved in the cell stress response. This Oryza sativa subsp. japonica (Rice) protein is Formate dehydrogenase 2, mitochondrial.